A 312-amino-acid polypeptide reads, in one-letter code: Small ribosomal subunit protein uS2 (312 aa).

The protein belongs to the universal ribosomal protein uS2 family.

This Ruthia magnifica subsp. Calyptogena magnifica protein is Small ribosomal subunit protein uS2.